A 156-amino-acid chain; its full sequence is Small ribosomal subunit protein uS7 (156 aa).

It belongs to the universal ribosomal protein uS7 family. As to quaternary structure, part of the 30S ribosomal subunit. Contacts proteins S9 and S11.

In terms of biological role, one of the primary rRNA binding proteins, it binds directly to 16S rRNA where it nucleates assembly of the head domain of the 30S subunit. Is located at the subunit interface close to the decoding center, probably blocks exit of the E-site tRNA. This chain is Small ribosomal subunit protein uS7 (rpsG), found in Geobacillus stearothermophilus (Bacillus stearothermophilus).